The primary structure comprises 295 residues: Bifunctional protein FolD (295 aa).

NADP(+) contacts are provided by residues 177–179 (GRS) and serine 202.

It belongs to the tetrahydrofolate dehydrogenase/cyclohydrolase family. As to quaternary structure, homodimer.

The catalysed reaction is (6R)-5,10-methylene-5,6,7,8-tetrahydrofolate + NADP(+) = (6R)-5,10-methenyltetrahydrofolate + NADPH. The enzyme catalyses (6R)-5,10-methenyltetrahydrofolate + H2O = (6R)-10-formyltetrahydrofolate + H(+). It participates in one-carbon metabolism; tetrahydrofolate interconversion. Catalyzes the oxidation of 5,10-methylenetetrahydrofolate to 5,10-methenyltetrahydrofolate and then the hydrolysis of 5,10-methenyltetrahydrofolate to 10-formyltetrahydrofolate. This chain is Bifunctional protein FolD, found in Psychrobacter arcticus (strain DSM 17307 / VKM B-2377 / 273-4).